The chain runs to 71 residues: uncharacterized protein (71 aa).

Its subcellular location is the plastid. The protein localises to the chloroplast. This is an uncharacterized protein from Mesostigma viride (Green alga).